We begin with the raw amino-acid sequence, 295 residues long: 4-hydroxy-tetrahydrodipicolinate synthase (295 aa).

T48 provides a ligand contact to pyruvate. Y136 functions as the Proton donor/acceptor in the catalytic mechanism. K164 serves as the catalytic Schiff-base intermediate with substrate. I206 contacts pyruvate.

It belongs to the DapA family. As to quaternary structure, homotetramer; dimer of dimers.

It is found in the cytoplasm. It catalyses the reaction L-aspartate 4-semialdehyde + pyruvate = (2S,4S)-4-hydroxy-2,3,4,5-tetrahydrodipicolinate + H2O + H(+). It functions in the pathway amino-acid biosynthesis; L-lysine biosynthesis via DAP pathway; (S)-tetrahydrodipicolinate from L-aspartate: step 3/4. In terms of biological role, catalyzes the condensation of (S)-aspartate-beta-semialdehyde [(S)-ASA] and pyruvate to 4-hydroxy-tetrahydrodipicolinate (HTPA). The sequence is that of 4-hydroxy-tetrahydrodipicolinate synthase from Actinobacillus pleuropneumoniae serotype 5b (strain L20).